Reading from the N-terminus, the 193-residue chain is uncharacterized protein (193 aa).

Arg8 is a binding site for substrate. His9 (tele-phosphohistidine intermediate) is an active-site residue. Substrate contacts are provided by Asn15, Gln21, and Arg58. The active-site Proton donor/acceptor is the Glu82. His139 lines the substrate pocket.

The protein belongs to the phosphoglycerate mutase family. GpmB subfamily.

Functionally, phosphatase with broad substrate specificity. Does not have phosphoglycerate mutase activity. This is an uncharacterized protein from Bacillus subtilis (strain 168).